A 164-amino-acid chain; its full sequence is Osteocalcin 2b (164 aa).

A signal peptide spans 1–18; that stretch reads MKSLTLLTICAVLSVSLS. A propeptide spanning residues 19 to 115 is cleaved from the precursor; that stretch reads MNDLALDVVL…LASVLLRRKR (97 aa). Low complexity predominate over residues 30 to 95; the sequence is PDPAAEPAPA…EAMAEDPAAA (66 aa). Positions 30 to 99 are disordered; it reads PDPAAEPAPA…EDPAAATEPE (70 aa). In terms of domain architecture, Gla spans 128–160; that stretch reads QVESLSEVCELNLACEHMAETAGIVAAYTAYYG. Glutamate 130, glutamate 134, and glutamate 137 together coordinate Ca(2+). 4-carboxyglutamate is present on residues glutamate 130, glutamate 134, and glutamate 137. A disulfide bond links cysteine 136 and cysteine 142.

This sequence belongs to the osteocalcin/matrix Gla protein family. In terms of processing, gamma-carboxyglutamate residues are formed by vitamin K dependent carboxylation. These residues are essential for the binding of calcium.

The protein localises to the secreted. In terms of biological role, binds strongly to apatite and calcium. The polypeptide is Osteocalcin 2b (Oncorhynchus mykiss (Rainbow trout)).